A 410-amino-acid polypeptide reads, in one-letter code: uncharacterized protein (410 aa).

Transmembrane regions (helical) follow at residues 14–34, 48–68, 82–102, 140–160, 164–184, 212–232, 251–271, 279–299, 303–323, 342–362, and 371–391; these read IIIGTIFGRMATSMSIPFLAI, GLVIAASSSVGILASFYGGYI, IFGWMLVFAGFAAASNLWVFF, YAAINIGVVFGPVLGLYFGSS, TPFLVPAVIYGLYGIVLALQF, YLFTIALVGITLCTFGYSQFS, LYGLMLTLNAIVVLATQFPIV, PLCSLMLGNVMVSISMAIFTV, VPSIVMIVITFTIGEVLLFSM, GAIGFSQLGNVIGPWVGGICI, and IYIFSVLSGITLLGLPFLAFA.

Belongs to the major facilitator superfamily. TCR/Tet family.

The protein resides in the cell membrane. This is an uncharacterized protein from Bacillus subtilis (strain 168).